The primary structure comprises 540 residues: CTP synthase (540 aa).

Positions 1–267 (MKIMKFIFIT…GKLVTKKLNL (267 aa)) are amidoligase domain. Ser-15 is a CTP binding site. Ser-15 provides a ligand contact to UTP. An ATP-binding site is contributed by 16–21 (SLGKGI). Tyr-56 serves as a coordination point for L-glutamine. Position 73 (Asp-73) interacts with ATP. Mg(2+)-binding residues include Asp-73 and Glu-141. CTP-binding positions include 148–150 (DIE), 188–193 (KTKPTQ), and Lys-224. UTP-binding positions include 188–193 (KTKPTQ) and Lys-224. 240–242 (RDA) contacts ATP. The Glutamine amidotransferase type-1 domain occupies 292–540 (TIGIVGKYVE…VRASLGEKIK (249 aa)). Gly-360 serves as a coordination point for L-glutamine. The active-site Nucleophile; for glutamine hydrolysis is Cys-387. Residues 388 to 391 (MGMQ), Glu-411, and Arg-468 contribute to the L-glutamine site. Residues His-513 and Glu-515 contribute to the active site.

This sequence belongs to the CTP synthase family. As to quaternary structure, homotetramer.

The catalysed reaction is UTP + L-glutamine + ATP + H2O = CTP + L-glutamate + ADP + phosphate + 2 H(+). The enzyme catalyses L-glutamine + H2O = L-glutamate + NH4(+). It catalyses the reaction UTP + NH4(+) + ATP = CTP + ADP + phosphate + 2 H(+). It participates in pyrimidine metabolism; CTP biosynthesis via de novo pathway; CTP from UDP: step 2/2. With respect to regulation, allosterically activated by GTP, when glutamine is the substrate; GTP has no effect on the reaction when ammonia is the substrate. The allosteric effector GTP functions by stabilizing the protein conformation that binds the tetrahedral intermediate(s) formed during glutamine hydrolysis. Inhibited by the product CTP, via allosteric rather than competitive inhibition. Catalyzes the ATP-dependent amination of UTP to CTP with either L-glutamine or ammonia as the source of nitrogen. Regulates intracellular CTP levels through interactions with the four ribonucleotide triphosphates. The chain is CTP synthase from Methanocaldococcus jannaschii (strain ATCC 43067 / DSM 2661 / JAL-1 / JCM 10045 / NBRC 100440) (Methanococcus jannaschii).